A 215-amino-acid polypeptide reads, in one-letter code: Programmed cell death protein 10 homolog (215 aa).

The protein belongs to the PDCD10 family. Interacts with gck-1. As to expression, expressed in pharynx, intestine, germline, vulva and excretory canals.

Its subcellular location is the cytoplasm. The protein localises to the apical cell membrane. Involved in excretory canal elongation during postembryonic development. Plays a role in promoting Golgi stability, ER integrity and vesicle transport probably by regulating the activation of Rho GTPase cdc-42. Involved in fertility. The protein is Programmed cell death protein 10 homolog of Caenorhabditis elegans.